The chain runs to 106 residues: YcgL domain-containing protein PsycPRwf_1721 (106 aa).

A YcgL domain is found at 1 to 94; the sequence is MHCDIYKFPK…PSDVLLAQAQ (94 aa).

In Psychrobacter sp. (strain PRwf-1), this protein is YcgL domain-containing protein PsycPRwf_1721.